The primary structure comprises 210 residues: Protein PF1979 (210 aa).

Positions 7–201 (EWGEFLVRLA…EEYPRGPVKR (195 aa)) constitute an AMMECR1 domain.

This chain is Protein PF1979, found in Pyrococcus furiosus (strain ATCC 43587 / DSM 3638 / JCM 8422 / Vc1).